The primary structure comprises 24 residues: GVTSNPAIFQKAISTSNAYNDQFR.

Belongs to the transaldolase family.

Its subcellular location is the cytoplasm. The catalysed reaction is D-sedoheptulose 7-phosphate + D-glyceraldehyde 3-phosphate = D-erythrose 4-phosphate + beta-D-fructose 6-phosphate. It participates in carbohydrate degradation; pentose phosphate pathway; D-glyceraldehyde 3-phosphate and beta-D-fructose 6-phosphate from D-ribose 5-phosphate and D-xylulose 5-phosphate (non-oxidative stage): step 2/3. Transaldolase is important for the balance of metabolites in the pentose-phosphate pathway. In Capsicum annuum var. annuum (Red pepper), this protein is Transaldolase.